A 300-amino-acid polypeptide reads, in one-letter code: tRNA pseudouridine synthase B (300 aa).

The active-site Nucleophile is the aspartate 38.

This sequence belongs to the pseudouridine synthase TruB family. Type 1 subfamily.

The catalysed reaction is uridine(55) in tRNA = pseudouridine(55) in tRNA. Its function is as follows. Responsible for synthesis of pseudouridine from uracil-55 in the psi GC loop of transfer RNAs. The polypeptide is tRNA pseudouridine synthase B (Anaplasma phagocytophilum (strain HZ)).